The primary structure comprises 95 residues: Aspartyl/glutamyl-tRNA(Asn/Gln) amidotransferase subunit C (95 aa).

The protein belongs to the GatC family. As to quaternary structure, heterotrimer of A, B and C subunits.

The catalysed reaction is L-glutamyl-tRNA(Gln) + L-glutamine + ATP + H2O = L-glutaminyl-tRNA(Gln) + L-glutamate + ADP + phosphate + H(+). The enzyme catalyses L-aspartyl-tRNA(Asn) + L-glutamine + ATP + H2O = L-asparaginyl-tRNA(Asn) + L-glutamate + ADP + phosphate + 2 H(+). Functionally, allows the formation of correctly charged Asn-tRNA(Asn) or Gln-tRNA(Gln) through the transamidation of misacylated Asp-tRNA(Asn) or Glu-tRNA(Gln) in organisms which lack either or both of asparaginyl-tRNA or glutaminyl-tRNA synthetases. The reaction takes place in the presence of glutamine and ATP through an activated phospho-Asp-tRNA(Asn) or phospho-Glu-tRNA(Gln). This chain is Aspartyl/glutamyl-tRNA(Asn/Gln) amidotransferase subunit C, found in Cereibacter sphaeroides (strain ATCC 17025 / ATH 2.4.3) (Rhodobacter sphaeroides).